A 379-amino-acid polypeptide reads, in one-letter code: uncharacterized protein (379 aa).

Residue 29–36 participates in ATP binding; the sequence is GPLNSGKT.

Belongs to the archaeal ATPase family.

This is an uncharacterized protein from Methanocaldococcus jannaschii (strain ATCC 43067 / DSM 2661 / JAL-1 / JCM 10045 / NBRC 100440) (Methanococcus jannaschii).